The primary structure comprises 37 residues: Protamine Z3 (37 aa).

A disordered region spans residues 1 to 37 (ARSRSRRSYGRGRRRGGRRRRRRRRRRRGGRRGRRSR).

As to expression, testis.

It localises to the nucleus. The protein resides in the chromosome. Its function is as follows. Protamines substitute for histones in the chromatin of sperm during the haploid phase of spermatogenesis. They compact sperm DNA into a highly condensed, stable and inactive complex. The chain is Protamine Z3 from Scyliorhinus canicula (Small-spotted catshark).